We begin with the raw amino-acid sequence, 151 residues long: Austinoid biosynthesis clusters protein F (151 aa).

This sequence belongs to the trt14 isomerase family. In terms of assembly, homodimer.

It participates in secondary metabolite biosynthesis; terpenoid biosynthesis. Part of the gene cluster B that mediates the biosynthesis of the fungal meroterpenoid acetoxydehydroaustin. The first step of the pathway is the synthesis of 3,5-dimethylorsellinic acid by the polyketide synthase ausA. 3,5-dimethylorsellinic acid is then prenylated by the polyprenyl transferase ausN. Further epoxidation by the FAD-dependent monooxygenase ausM and cyclization by the probable terpene cyclase ausL lead to the formation of protoaustinoid A. Protoaustinoid A is then oxidized to spiro-lactone preaustinoid A3 by the combined action of the FAD-binding monooxygenases ausB and ausC, and the dioxygenase ausE. Acid-catalyzed keto-rearrangement and ring contraction of the tetraketide portion of preaustinoid A3 by ausJ lead to the formation of preaustinoid A4. The aldo-keto reductase ausK, with the help of ausH, is involved in the next step by transforming preaustinoid A4 into isoaustinone which is in turn hydroxylated by the P450 monooxygenase ausI to form austinolide. The cytochrome P450 monooxygenase ausG then modifies austinolide to austinol. Austinol is further acetylated to austin by the O-acetyltransferase ausP, which spontaneously changes to dehydroaustin. The cytochrome P450 monooxygenase then converts dehydroaustin is into 7-dehydrodehydroaustin. The hydroxylation catalyzed by ausR permits the second O-acetyltransferase ausQ to add an additional acetyl group to the molecule, leading to the formation of acetoxydehydroaustin. Due to genetic rearrangements of the clusters and the subsequent loss of some enzymes, the end product of the Penicillium brasilianum austinoid biosynthesis clusters is acetoxydehydroaustin. The sequence is that of Austinoid biosynthesis clusters protein F from Penicillium brasilianum.